A 276-amino-acid chain; its full sequence is Nickel import system permease protein NikC (276 aa).

5 helical membrane passes run 10–30 (LIFF…FFVS), 73–93 (LFVT…LGLF), 108–128 (FIDV…ASFF), 186–206 (IIPA…LYIS), and 238–258 (IMLI…NLTG). The region spanning 69-258 (ARSTLFVTVL…ITILIFNLTG (190 aa)) is the ABC transmembrane type-1 domain.

The protein belongs to the binding-protein-dependent transport system permease family. OppBC subfamily. The complex is composed of two ATP-binding proteins (NikD and NikE), two transmembrane proteins (NikB and NikC) and a solute-binding protein (NikA).

It is found in the cell membrane. Functionally, part of the ABC transporter complex NikABCDE (Opp2) involved in nickel import. Probably responsible for the translocation of the substrate across the membrane. The protein is Nickel import system permease protein NikC of Staphylococcus aureus (strain USA300).